The chain runs to 65 residues: Conotoxin tx3c (65 aa).

The first 19 residues, 1–19 (MFKLGVLLTICLLLFSLNA), serve as a signal peptide directing secretion. Residues 20–50 (VPLDGDQPADQPAERLLDDISFENNPFYDPA) constitute a propeptide that is removed on maturation. Disulfide bonds link cysteine 53–cysteine 64, cysteine 54–cysteine 60, and cysteine 57–cysteine 63. Residue proline 62 is modified to 4-hydroxyproline; partial. Cysteine 64 is modified (cysteine amide).

In terms of processing, the hydroxylation at Pro-62 is observed in PubMed:15924437, PubMed:19380747 and PubMed:22709442, and the non-hydroxylation is described in PubMed:22709442. As to expression, expressed by the venom duct.

The protein localises to the secreted. Its function is as follows. Causes scratching in mice. This Conus textile (Cloth-of-gold cone) protein is Conotoxin tx3c.